The chain runs to 92 residues: Probable Fe(2+)-trafficking protein (92 aa).

The protein belongs to the Fe(2+)-trafficking protein family.

Could be a mediator in iron transactions between iron acquisition and iron-requiring processes, such as synthesis and/or repair of Fe-S clusters in biosynthetic enzymes. The sequence is that of Probable Fe(2+)-trafficking protein from Xanthomonas oryzae pv. oryzae (strain MAFF 311018).